The following is a 92-amino-acid chain: Trp operon repressor homolog (92 aa).

Residues 56–79 (QREVASKLGVSITKITRGAANLQD) mediate DNA binding.

It belongs to the TrpR family. As to quaternary structure, homodimer.

It localises to the cytoplasm. Functionally, this protein is an aporepressor. When complexed with L-tryptophan it binds the operator region of the trp operon and prevents the initiation of transcription. This Xylella fastidiosa (strain M23) protein is Trp operon repressor homolog.